Consider the following 206-residue polypeptide: Casparian strip membrane protein 1 (206 aa).

Alanine 2 carries the N-acetylalanine modification. The Cytoplasmic portion of the chain corresponds to 2-43; sequence AKESTTIDVGEPSTVTKSSSHVVKDAKKKGFVAVASRGGAKR. The chain crosses the membrane as a helical span at residues 44–64; it reads GLAIFDFLLRLAAIAVTIGAA. The Extracellular segment spans residues 65–95; the sequence is SVMYTAEETLPFFTQFLQFQAGYDDLPAFQY. Residues 96–116 form a helical membrane-spanning segment; that stretch reads FVIAVAVVASYLVLSLPFSIV. Topologically, residues 117–127 are cytoplasmic; the sequence is SIVRPHAVAPR. A helical membrane pass occupies residues 128–148; sequence LILLICDTLVVTLNTSAAAAA. The Extracellular portion of the chain corresponds to 149 to 180; the sequence is ASITYLAHNGNQSTNWLPICQQFGDFCQNVST. Asparagine 159 and asparagine 177 each carry an N-linked (GlcNAc...) asparagine glycan. Residues 181–201 form a helical membrane-spanning segment; that stretch reads AVVADSIAILFFIVLIIISAI. The Cytoplasmic segment spans residues 202 to 206; sequence ALKRH.

It belongs to the Casparian strip membrane proteins (CASP) family. Homodimer and heterodimers with other CASP proteins. Interacts with CASP2, CASP3, CASP4 and CASP5.

The protein resides in the cell membrane. Regulates membrane-cell wall junctions and localized cell wall deposition. Required for establishment of the Casparian strip membrane domain (CSD) and the subsequent formation of Casparian strips, a cell wall modification of the root endodermis that determines an apoplastic barrier between the intraorganismal apoplasm and the extraorganismal apoplasm and prevents lateral diffusion. This Arabidopsis thaliana (Mouse-ear cress) protein is Casparian strip membrane protein 1 (CASP1).